Here is a 362-residue protein sequence, read N- to C-terminus: Aspartate-semialdehyde dehydrogenase (362 aa).

NADP(+) is bound by residues threonine 15, glycine 16, alanine 17, valine 18, serine 40, serine 43, leucine 87, and aspartate 88. The active-site Acyl-thioester intermediate is the cysteine 154. NADP(+) is bound at residue glycine 186. The active-site Proton acceptor is the histidine 251. Asparagine 340 lines the NADP(+) pocket.

The protein belongs to the aspartate-semialdehyde dehydrogenase family. As to quaternary structure, homotetramer; dimer of dimers.

Its subcellular location is the cytoplasm. The protein resides in the cytosol. It is found in the nucleus. It carries out the reaction L-aspartate 4-semialdehyde + phosphate + NADP(+) = 4-phospho-L-aspartate + NADPH + H(+). The protein operates within amino-acid biosynthesis; L-methionine biosynthesis via de novo pathway; L-homoserine from L-aspartate: step 2/3. Its pathway is amino-acid biosynthesis; L-threonine biosynthesis; L-threonine from L-aspartate: step 2/5. Its function is as follows. Catalyzes the NADPH-dependent formation of L-aspartate 4-semialdehyde (L-ASA) by the reductive dephosphorylation of 4-phospho-L-aspartate. Mediates the second step in the biosynthesis of amino acids that derive from aspartate (the aspartate family of amino acids), including methioinine and threonine, the latter of which is a precursor to isoleucine. The chain is Aspartate-semialdehyde dehydrogenase from Trichophyton rubrum (strain ATCC MYA-4607 / CBS 118892) (Athlete's foot fungus).